Reading from the N-terminus, the 303-residue chain is Glutaminase (303 aa).

S61, N111, E155, N162, Y186, Y238, and V256 together coordinate substrate.

The protein belongs to the glutaminase family. In terms of assembly, homotetramer.

The enzyme catalyses L-glutamine + H2O = L-glutamate + NH4(+). In Marinomonas sp. (strain MWYL1), this protein is Glutaminase.